Consider the following 2176-residue polypeptide: Protein eyes shut (2176 aa).

The Cytoplasmic portion of the chain corresponds to 1-122; the sequence is MSNVHQFDTQ…NPNILLPTLR (122 aa). A helical transmembrane segment spans residues 123 to 143; that stretch reads ILARGLLLPALILAILVGSSQ. One can recognise an EGF-like 1 domain in the interval 144–180; it reads AGFACLSNPCVFGVCIDGLNSSYSCYCIDGYTGIQCQ. Topologically, residues 144–2176 are extracellular; it reads AGFACLSNPC…DLHGDEPLTV (2033 aa). Disulfide bonds link Cys148-Cys158, Cys153-Cys168, Cys170-Cys179, Cys186-Cys197, Cys191-Cys206, Cys208-Cys217, Cys224-Cys235, Cys229-Cys244, Cys246-Cys255, Cys262-Cys276, Cys270-Cys286, Cys288-Cys297, Cys304-Cys315, Cys309-Cys324, Cys326-Cys335, Cys342-Cys353, Cys347-Cys362, Cys364-Cys373, Cys380-Cys392, Cys386-Cys401, and Cys403-Cys412. N-linked (GlcNAc...) asparagine glycosylation occurs at Asn163. The region spanning 182–218 is the EGF-like 2; calcium-binding domain; it reads NWDECWSSPCQNGGTCVDGVAYYNCTCPEGFSGSNCE. N-linked (GlcNAc...) asparagine glycosylation is present at Asn205. The EGF-like 3; calcium-binding domain occupies 220 to 256; it reads NVDECMSNPCQNGGLCRDRTNGYICTCQPGYLGSHCE. Residues 258–298 form the EGF-like 4 domain; the sequence is DVAVCETGTGARCQHGGECIEGPGLEFTCDCPAGWHGRICQ. Residues 300 to 336 enclose the EGF-like 5; calcium-binding domain; the sequence is EINECASSPCQNGGVCVDKLAAYACACPMGYTGINCE. In terms of domain architecture, EGF-like 6 spans 338–374; the sequence is EILICADNPCQNNALCLMEEGVPTCYCVPDYHGEKCE. The EGF-like 7; calcium-binding domain maps to 376–413; it reads QYDECQLGPRCMNGGVCIDGVDTFSCSCPPLLTGMLCE. N-linked (GlcNAc...) asparagine glycosylation occurs at Asn425. Composition is skewed to low complexity over residues 429–447 and 482–502; these read PATQ…MAPP and VTSV…VSVE. 5 disordered regions span residues 429 to 465, 482 to 639, 757 to 783, 802 to 854, and 902 to 1014; these read PATQ…SRAS, VTSV…RPTA, RFTT…LPTP, LITT…VEIT, and APPA…GVPE. The segment covering 514 to 526 has biased composition (polar residues); it reads GSHSISVEQTTAV. The span at 548–560 shows a compositional bias: acidic residues; it reads SASESETETEEEI. Composition is skewed to low complexity over residues 564–582 and 596–632; these read TTAR…ESPS and TSAS…SEEV. Positions 757-775 are enriched in polar residues; the sequence is RFTTVQPPAGVTTTSPTED. A compositionally biased stretch (basic residues) spans 811-820; the sequence is THHHHHHHPH. Composition is skewed to pro residues over residues 904–922 and 930–955; these read PATP…PSPP and TLPP…PTPP. An EGF-like 8 domain is found at 1018–1054; it reads GDVDCIKLGCYNGGTCVTTSEGSRCVCRFDRQGPLCE. Intrachain disulfides connect Cys1022/Cys1033, Cys1027/Cys1042, and Cys1044/Cys1053. The 208-residue stretch at 1059 to 1266 folds into the Laminin G-like 1 domain; it reads IRNAAFSGDS…GITECGSLAC (208 aa). 3 N-linked (GlcNAc...) asparagine glycosylation sites follow: Asn1165, Asn1170, and Asn1176. One can recognise an EGF-like 9 domain in the interval 1309-1346; sequence EISVCEDNPCQYGGTCVQFPGSGYLCLCPLGKHGHYCE. Disulfide bonds link Cys1313–Cys1324, Cys1318–Cys1334, and Cys1336–Cys1345. The Laminin G-like 2 domain maps to 1353 to 1549; that stretch reads LPSFSGSVNG…GVGQCGTREC (197 aa). A glycan (N-linked (GlcNAc...) asparagine) is linked at Asn1471. 2 EGF-like domains span residues 1545-1581 and 1583-1621; these read GTRE…PLCA and PTNP…KNCE. 6 cysteine pairs are disulfide-bonded: Cys1549/Cys1560, Cys1554/Cys1569, Cys1571/Cys1580, Cys1587/Cys1600, Cys1594/Cys1609, and Cys1611/Cys1620. Residues Asn1665 and Asn1861 are each glycosylated (N-linked (GlcNAc...) asparagine). One can recognise a Laminin G-like 3 domain in the interval 1692–1879; that stretch reads EKQRSFSPVP…NIRDCDGTAC (188 aa). EGF-like domains lie at 1875 to 1912 and 1913 to 1946; these read DGTA…DRCE and YSET…FYCE. Cystine bridges form between Cys1879/Cys1890, Cys1884/Cys1900, Cys1902/Cys1911, Cys1917/Cys1928, Cys1922/Cys1934, and Cys1936/Cys1945. The Laminin G-like 4 domain maps to 1952-2166; it reads PTTPSFRGNS…TYQGENIGSC (215 aa). 3 N-linked (GlcNAc...) asparagine glycosylation sites follow: Asn1994, Asn2035, and Asn2099. A disordered region spans residues 2080–2101; that stretch reads GGRSLGSTTPRSTLAGRRKNSS.

Belongs to the EYS family. As to expression, expressed from the beginning of rhabdomere biogenesis (48 hours after pupal formation), when it decorates the entire photoreceptor apical surface.

The protein resides in the membrane. Its subcellular location is the secreted. Its function is as follows. Essential for the formation of matrix-filled interrhabdomeral space: critical for the formation of epithelial lumina in the retina. Acts together with prominin (prom) and the cell adhesion molecule chaoptin (chp) to choreograph the partitioning of rhabdomeres into an open system. In Drosophila melanogaster (Fruit fly), this protein is Protein eyes shut.